The chain runs to 20 residues: AVXHPGTXVSXAAXXXFIPL.

The protein belongs to the peroxidase family. Ligninase subfamily.

The protein localises to the secreted. It carries out the reaction 2 Mn(2+) + H2O2 + 2 H(+) = 2 Mn(3+) + 2 H2O. Functionally, catalyzes the oxidation of Mn(2+) to Mn(3+). The latter, acting as a diffusible redox mediator, is capable of oxidizing a variety of lignin compounds. The polypeptide is Manganese peroxidase H5 (Phanerodontia chrysosporium (White-rot fungus)).